We begin with the raw amino-acid sequence, 138 residues long: Nucleoside diphosphate kinase (138 aa).

Residues Lys12, Tyr60, Arg88, Thr94, Arg105, and Asn115 each coordinate ATP. His118 functions as the Pros-phosphohistidine intermediate in the catalytic mechanism.

It belongs to the NDK family. In terms of assembly, homotetramer. It depends on Mg(2+) as a cofactor.

Its subcellular location is the cytoplasm. It catalyses the reaction a 2'-deoxyribonucleoside 5'-diphosphate + ATP = a 2'-deoxyribonucleoside 5'-triphosphate + ADP. The enzyme catalyses a ribonucleoside 5'-diphosphate + ATP = a ribonucleoside 5'-triphosphate + ADP. Functionally, major role in the synthesis of nucleoside triphosphates other than ATP. The ATP gamma phosphate is transferred to the NDP beta phosphate via a ping-pong mechanism, using a phosphorylated active-site intermediate. The chain is Nucleoside diphosphate kinase from Cutibacterium acnes (strain DSM 16379 / KPA171202) (Propionibacterium acnes).